The chain runs to 689 residues: Quinidine resistance protein 3 (689 aa).

Residues 1–24 are compositionally biased toward polar residues; it reads MQAQGSQSNVGSLRSNCSDNSLPN. Residues 1-73 form a disordered region; it reads MQAQGSQSNV…DNQLSRLKSE (73 aa). Residues 1–108 are Extracellular-facing; sequence MQAQGSQSNV…RDYPPMMKKM (108 aa). Basic and acidic residues-rich tracts occupy residues 29-51 and 59-73; these read MHCD…EKTN and SREH…LKSE. A helical membrane pass occupies residues 109–131; the sequence is IVFLIAFSSMMGPMGTSIIFPAI. The Cytoplasmic segment spans residues 132 to 139; it reads NSITTEFK. Residues 140 to 163 form a helical membrane-spanning segment; the sequence is TSVIMVNVSIGVYLLSLGVFPLWW. Topologically, residues 164–175 are extracellular; it reads SSLSELEGRRTT. Residues 176-193 form a helical membrane-spanning segment; sequence YITSFALLFAFNIGSALA. Over 194–235 the chain is Cytoplasmic; the sequence is PDINSFIALRMLCGAASASVQSVGAGTVADLYISEDRGKNLS. A helical membrane pass occupies residues 236–256; the sequence is YYYLGPLLAPLLSPIFGSLLV. Residues 257–265 are Extracellular-facing; the sequence is NRWPWRSTQ. A helical membrane pass occupies residues 266 to 283; it reads WFMVILSGCNVILLTVLL. Residues 284–475 are Cytoplasmic-facing; that stretch reads PETLRKQDSK…KSLHFLEYPP (192 aa). Phosphoserine is present on S436. A helical transmembrane segment spans residues 476-493; it reads VALAITFSAISFSTVYFV. The Extracellular portion of the chain corresponds to 494–510; the sequence is NMTVEYKYSRPPYNFKP. A helical membrane pass occupies residues 511-532; that stretch reads LYIGLLYIPNSVTYFFASIYGG. At 533 to 558 the chain is on the cytoplasmic side; it reads RWVDMLLKRYKEKYGILAPEARISWN. A helical membrane pass occupies residues 559–577; the sequence is VVTSVISFPIALLIFGWCL. Topologically, residues 578-586 are extracellular; the sequence is DKKCHWVTP. Residues 587-609 form a helical membrane-spanning segment; it reads LIGTALFGYAAMMTIGATLSYLV. Residues 610 to 624 lie on the Cytoplasmic side of the membrane; it reads DSLPGKGATGVALNN. Residues 625–642 form a helical membrane-spanning segment; it reads LIRQILAATAVFVTTPML. Residues 643–648 are Extracellular-facing; that stretch reads NGMGTG. Residues 649-668 traverse the membrane as a helical segment; that stretch reads WAFTMLAFIVLGASSVLIIL. Topologically, residues 669–689 are cytoplasmic; sequence KKHGDYWRENYDLQKLYDKID.

This sequence belongs to the major facilitator superfamily. CAR1 family.

It is found in the cell membrane. Multidrug resistance transporter involved in resistance and adaptation to quinidine and to the herbicide barban (4-chloro-2-butynyl [3-chlorophenyl] carbamate). The sequence is that of Quinidine resistance protein 3 (QDR3) from Saccharomyces cerevisiae (strain ATCC 204508 / S288c) (Baker's yeast).